Here is a 507-residue protein sequence, read N- to C-terminus: Arylsulfatase A (507 aa).

The first 18 residues, 1 to 18, serve as a signal peptide directing secretion; the sequence is MEALWTLTLALAAGLAAA. The Ca(2+) site is built by D29, D30, and C69. C69 acts as the Nucleophile in catalysis. C69 is modified (3-oxoalanine (Cys)). K123 serves as a coordination point for substrate. H125 is a catalytic residue. Residue S150 coordinates substrate. 2 cysteine pairs are disulfide-bonded: C156–C172 and C161–C168. N-linked (GlcNAc...) asparagine glycosylation is present at N158. N-linked (GlcNAc...) asparagine glycosylation occurs at N184. H229 is a substrate binding site. Positions 281 and 282 each coordinate Ca(2+). Intrachain disulfides connect C300–C414, C488–C500, C489–C502, and C493–C499. K302 serves as a coordination point for substrate. An N-linked (GlcNAc...) asparagine glycan is attached at N350.

This sequence belongs to the sulfatase family. Homodimer at neutral pH and homooctamer at acidic pH. Exists both as a single chain of 58 kDa (component A) or as a chain of 50 kDa (component B) linked by disulfide bond(s) to a 7 kDa chain (component C). Interacts with SUMF1. It depends on Ca(2+) as a cofactor. Post-translationally, the conversion to 3-oxoalanine (also known as C-formylglycine, FGly), of a serine or cysteine residue in prokaryotes and of a cysteine residue in eukaryotes, is critical for catalytic activity. This post-translational modification is severely defective in multiple sulfatase deficiency (MSD).

The protein localises to the endoplasmic reticulum. Its subcellular location is the lysosome. It catalyses the reaction an N-acyl-1-beta-D-(3-O-sulfo)-galactosyl-sphing-4-enine + H2O = a beta-D-galactosyl-(1&lt;-&gt;1')-N-acylsphing-4-enine + sulfate + H(+). Hydrolyzes cerebroside sulfate. In Bos taurus (Bovine), this protein is Arylsulfatase A (ARSA).